A 97-amino-acid polypeptide reads, in one-letter code: Large ribosomal subunit protein uL23 (97 aa).

It belongs to the universal ribosomal protein uL23 family. In terms of assembly, part of the 50S ribosomal subunit. Contacts protein L29, and trigger factor when it is bound to the ribosome.

Functionally, one of the early assembly proteins it binds 23S rRNA. One of the proteins that surrounds the polypeptide exit tunnel on the outside of the ribosome. Forms the main docking site for trigger factor binding to the ribosome. The polypeptide is Large ribosomal subunit protein uL23 (Lactococcus lactis subsp. cremoris (strain SK11)).